A 603-amino-acid chain; its full sequence is UvrABC system protein C (603 aa).

The GIY-YIG domain maps to 13–92 (NGPGVYLMKD…IRKHKPRYNI (80 aa)). The UVR domain occupies 202–237 (NDLLQKIKEQMAAASERQEYELAARLRDRMFAIQAT).

It belongs to the UvrC family. Interacts with UvrB in an incision complex.

The protein resides in the cytoplasm. The UvrABC repair system catalyzes the recognition and processing of DNA lesions. UvrC both incises the 5' and 3' sides of the lesion. The N-terminal half is responsible for the 3' incision and the C-terminal half is responsible for the 5' incision. The polypeptide is UvrABC system protein C (Desulfatibacillum aliphaticivorans).